The chain runs to 443 residues: MIAAPLDAVADSKGKKPFYSHLYVQVLAAIAAGILLGHFYPELGTQLKPLGDAFIKLVKMVIAPVIFLTVATGIAGMSDLKKVGRVAGKAMLYFLTFSTLALVIGMIVANVVQPGAGMNIDPASLDPKAVATFADKAHEQSIVGFLTNIIPTTIVGAFADGDILQVLFFSVLFGIALAMVGEKGEQVVTFLNALTAPIFKLVGILMKAAPIGAFGAMAFTIGKYGIGSIANLAMLIGTFYITSLLFVLVVLGAVARYNGFSILALLRYIKEELLLVLGTSSSEAALPGLMNKMEKAGCKRSVVGLVIPTGYSFNLDGTNIYMTLAALFIAQATGIQLSWGDQILLLLVAMLSSKGAAGITGAGFITLAATLSVVPSVPVAGMALILGIDRFMSECRALTNLVGNAVATIVVARWENELDTGQLARALGGESEDTSTAGLQPAE.

9 helical membrane-spanning segments follow: residues 17–37 (PFYSHLYVQVLAAIAAGILLG), 57–77 (LVKMVIAPVIFLTVATGIAGM), 92–112 (LYFLTFSTLALVIGMIVANVV), 139–159 (EQSIVGFLTNIIPTTIVGAFA), 161–181 (GDILQVLFFSVLFGIALAMVG), 201–221 (LVGILMKAAPIGAFGAMAFTI), 234–254 (MLIGTFYITSLLFVLVVLGAV), 320–340 (IYMTLAALFIAQATGIQLSWG), and 368–388 (AATLSVVPSVPVAGMALILGI).

Belongs to the dicarboxylate/amino acid:cation symporter (DAACS) (TC 2.A.23) family.

Its subcellular location is the cell inner membrane. Its function is as follows. Responsible for the transport of dicarboxylates such as succinate, fumarate, and malate from the periplasm across the membrane. This is C4-dicarboxylate transport protein from Rhizobium etli (strain ATCC 51251 / DSM 11541 / JCM 21823 / NBRC 15573 / CFN 42).